A 102-amino-acid chain; its full sequence is Urease subunit beta (102 aa).

This sequence belongs to the urease beta subunit family. As to quaternary structure, heterotrimer of UreA (gamma), UreB (beta) and UreC (alpha) subunits. Three heterotrimers associate to form the active enzyme.

It is found in the cytoplasm. The catalysed reaction is urea + 2 H2O + H(+) = hydrogencarbonate + 2 NH4(+). It functions in the pathway nitrogen metabolism; urea degradation; CO(2) and NH(3) from urea (urease route): step 1/1. This is Urease subunit beta from Bordetella parapertussis (strain 12822 / ATCC BAA-587 / NCTC 13253).